The following is an 84-amino-acid chain: CLAVATA3/ESR (CLE)-related protein 13 (84 aa).

A signal peptide spans 1-29 (MGRYTTDQVQVYVLVIVLCTFFSTLQARS). Positions 57-84 (KQVRDISGDRLSPAGPDPQHNGRSPPRK) are disordered. Hydroxyproline is present on residues proline 69 and proline 72. Proline 72 is a glycosylation site (O-linked (Ara...) hydroxyproline).

This sequence belongs to the CLV3/ESR signal peptide family. Post-translationally, the O-glycosylation (arabinosylation) of the hydroxyproline Pro-72 enhances binding affinity of the CLE13p peptide for its receptor. Expressed in young nodules throughout the central tissue. Expressed in the apical region of elongated nodules, corresponding to the meristematic and early infection zones.

The protein resides in the secreted. It localises to the extracellular space. Functionally, signaling peptide involved in the regulation of nodulation. Moves from root to shoot to function with the receptor kinase SUNN, in a signaling pathway that plays roles during cellular differentiation, both at the onset of nodulation, and later during nodule meristem development and subsequent homeostasis. Interacts with SUNN signaling to control nodule numbers. SUNN is involved in the autoregulation of nodulation (AON), a long distance systemic signaling from root to shoot and back again, which allows legumes to limit the number of root nodules formed based on available nitrogen and previous rhizobial colonization. The sequence is that of CLAVATA3/ESR (CLE)-related protein 13 from Medicago truncatula (Barrel medic).